We begin with the raw amino-acid sequence, 193 residues long: Orotate phosphoribosyltransferase (193 aa).

Residue 114 to 122 (EDVITTGGS) participates in 5-phospho-alpha-D-ribose 1-diphosphate binding. Orotate-binding residues include threonine 118 and arginine 146.

The protein belongs to the purine/pyrimidine phosphoribosyltransferase family. PyrE subfamily. In terms of assembly, homodimer. Requires Mg(2+) as cofactor.

It catalyses the reaction orotidine 5'-phosphate + diphosphate = orotate + 5-phospho-alpha-D-ribose 1-diphosphate. Its pathway is pyrimidine metabolism; UMP biosynthesis via de novo pathway; UMP from orotate: step 1/2. Its function is as follows. Catalyzes the transfer of a ribosyl phosphate group from 5-phosphoribose 1-diphosphate to orotate, leading to the formation of orotidine monophosphate (OMP). The sequence is that of Orotate phosphoribosyltransferase from Chlorobaculum parvum (strain DSM 263 / NCIMB 8327) (Chlorobium vibrioforme subsp. thiosulfatophilum).